We begin with the raw amino-acid sequence, 148 residues long: 3-dehydroquinate dehydratase (148 aa).

Tyr23 serves as the catalytic Proton acceptor. Substrate contacts are provided by Asn75, His81, and Asp88. His101 (proton donor) is an active-site residue. Substrate-binding positions include 102 to 103 (LS) and Arg112.

The protein belongs to the type-II 3-dehydroquinase family. In terms of assembly, homododecamer.

It carries out the reaction 3-dehydroquinate = 3-dehydroshikimate + H2O. The protein operates within metabolic intermediate biosynthesis; chorismate biosynthesis; chorismate from D-erythrose 4-phosphate and phosphoenolpyruvate: step 3/7. Catalyzes a trans-dehydration via an enolate intermediate. This chain is 3-dehydroquinate dehydratase, found in Cellvibrio japonicus (strain Ueda107) (Pseudomonas fluorescens subsp. cellulosa).